Consider the following 458-residue polypeptide: Cytoplasmic tRNA 2-thiolation protein 2 (458 aa).

This sequence belongs to the CTU2/NCS2 family.

The protein resides in the cytoplasm. It functions in the pathway tRNA modification; 5-methoxycarbonylmethyl-2-thiouridine-tRNA biosynthesis. Its function is as follows. Plays a central role in 2-thiolation of mcm(5)S(2)U at tRNA wobble positions of tRNA(Lys), tRNA(Glu) and tRNA(Gln). May act by forming a heterodimer with NCS6/CTU1 that ligates sulfur from thiocarboxylated URM1 onto the uridine of tRNAs at wobble position. The chain is Cytoplasmic tRNA 2-thiolation protein 2 from Arabidopsis thaliana (Mouse-ear cress).